The primary structure comprises 440 residues: Protein FPV117 (440 aa).

This sequence belongs to the poxviruses G5 family.

This Fowlpox virus (strain NVSL) (FPV) protein is Protein FPV117.